The following is a 156-amino-acid chain: Small ribosomal subunit protein bS16 (156 aa).

Residues 114–156 (ENEPVAEAITPKKKKAAKADEAKAEDTAADAEAPAADAEAADK) form a disordered region. The segment covering 130 to 139 (AKADEAKAED) has biased composition (basic and acidic residues). The span at 143 to 156 (DAEAPAADAEAADK) shows a compositional bias: low complexity.

Belongs to the bacterial ribosomal protein bS16 family.

In Rhodococcus erythropolis (strain PR4 / NBRC 100887), this protein is Small ribosomal subunit protein bS16.